Here is a 146-residue protein sequence, read N- to C-terminus: Hemoglobin subunit beta (146 aa).

Val1 is modified (N-acetylvaline). The region spanning His2–His146 is the Globin domain. Thr12 is modified (phosphothreonine). Ser44 carries the phosphoserine modification. An N6-acetyllysine modification is found at Lys59. His63 serves as a coordination point for heme b. At Lys82 the chain carries N6-acetyllysine. His92 is a heme b binding site. The residue at position 93 (Cys93) is an S-nitrosocysteine. Residue Lys144 is modified to N6-acetyllysine.

The protein belongs to the globin family. As to quaternary structure, heterotetramer of two alpha chains and two beta chains. In terms of tissue distribution, red blood cells.

In terms of biological role, involved in oxygen transport from the lung to the various peripheral tissues. The protein is Hemoglobin subunit beta (HBB) of Piliocolobus badius (Western red colobus).